The primary structure comprises 760 residues: uncharacterized protein (760 aa).

The N-terminal stretch at 1–20 is a signal peptide; that stretch reads MKFKLFLGSSFFGVATLLIA. Residue Cys21 is the site of N-palmitoyl cysteine attachment. A lipid anchor (S-diacylglycerol cysteine) is attached at Cys21. 3 disordered regions span residues 221 to 243, 272 to 315, and 705 to 741; these read ENAANGTTEKAEKTVSASSLQLK, AKTN…TSDD, and IKATSKEGEQNQGKKGDGAQNQGKKGDGAQNGKNDKA. The span at 272–284 shows a compositional bias: basic and acidic residues; it reads AKTNGEKGNEKQE. Polar residues predominate over residues 300–312; it reads KNTSQDKTQNTQT. The span at 705–721 shows a compositional bias: basic and acidic residues; sequence IKATSKEGEQNQGKKGD.

Belongs to the MG185/MG260 family.

It is found in the cell membrane. This is an uncharacterized protein from Mycoplasma pneumoniae (strain ATCC 29342 / M129 / Subtype 1) (Mycoplasmoides pneumoniae).